The chain runs to 886 residues: DNA mismatch repair protein MutS (886 aa).

641–648 (GPNMAGKS) contacts ATP.

This sequence belongs to the DNA mismatch repair MutS family.

In terms of biological role, this protein is involved in the repair of mismatches in DNA. It is possible that it carries out the mismatch recognition step. This protein has a weak ATPase activity. This is DNA mismatch repair protein MutS from Rickettsia akari (strain Hartford).